Reading from the N-terminus, the 527-residue chain is UPF0053 protein YegH (527 aa).

5 helical membrane-spanning segments follow: residues 14–34 (ITLI…IAIL), 51–71 (LLLA…LVTL), 81–101 (FTFS…LFKA), 145–165 (ITAV…VIAI), and 185–205 (IVIL…AEGF). 2 CBS domains span residues 306-366 (MTSR…GEPL) and 371-429 (LIRQ…PNEV).

The protein belongs to the UPF0053 family.

It localises to the cell membrane. This is UPF0053 protein YegH (yegH) from Escherichia coli (strain K12).